Here is a 241-residue protein sequence, read N- to C-terminus: Major microneme antigen (241 aa).

The signal sequence occupies residues 1-34 (MTLPIHFPRCVLYGMASAVWSILFLHILVGDTMS). Positions 35–103 (AADALSWSGG…ATGRGPSFVH (69 aa)) are excised as a propeptide. The span at 64-83 (GKELEQQHGGEEQQMQRDTK) shows a compositional bias: basic and acidic residues. The segment at 64–90 (GKELEQQHGGEEQQMQRDTKPAAFSNP) is disordered. PAN domains lie at 112–181 (CFPH…PRSC) and 185–241 (CTDN…VERA). Cystine bridges form between cysteine 112/cysteine 181, cysteine 137/cysteine 159, cysteine 141/cysteine 147, cysteine 185/cysteine 189, cysteine 210/cysteine 230, and cysteine 214/cysteine 220. Serine 121 contacts a carbohydrate. Positions 162, 169, and 174 each coordinate a carbohydrate.

The protein belongs to the microneme antigen family. Homodimer or heterodimer of major microneme antigen and microneme antigen. In terms of processing, contains six disulfide bonds.

The protein resides in the cytoplasmic vesicle. Its subcellular location is the secretory vesicle. It localises to the microneme. Its function is as follows. Galactose-binding lectin. Plays a role in adhesion to the host cell. Has a potential role in invasion of host cells. The polypeptide is Major microneme antigen (Sarcocystis muris).